We begin with the raw amino-acid sequence, 347 residues long: Holliday junction branch migration complex subunit RuvB (347 aa).

The interval 4–184 (QDRIVDGHAS…FGIVQRLEFY (181 aa)) is large ATPase domain (RuvB-L). ATP contacts are provided by residues Arg-24, Gly-65, Lys-68, Thr-69, Thr-70, 131 to 133 (EDF), Arg-174, Tyr-184, and Arg-221. Thr-69 lines the Mg(2+) pocket. The small ATPAse domain (RuvB-S) stretch occupies residues 185–255 (SVQDLTHIVK…IADSALNMLN (71 aa)). Residues 258–347 (HHGFDHMDRR…SQQQDSLPGI (90 aa)) form a head domain (RuvB-H) region. 3 residues coordinate DNA: Arg-294, Arg-313, and Arg-318.

It belongs to the RuvB family. Homohexamer. Forms an RuvA(8)-RuvB(12)-Holliday junction (HJ) complex. HJ DNA is sandwiched between 2 RuvA tetramers; dsDNA enters through RuvA and exits via RuvB. An RuvB hexamer assembles on each DNA strand where it exits the tetramer. Each RuvB hexamer is contacted by two RuvA subunits (via domain III) on 2 adjacent RuvB subunits; this complex drives branch migration. In the full resolvosome a probable DNA-RuvA(4)-RuvB(12)-RuvC(2) complex forms which resolves the HJ.

It is found in the cytoplasm. It carries out the reaction ATP + H2O = ADP + phosphate + H(+). In terms of biological role, the RuvA-RuvB-RuvC complex processes Holliday junction (HJ) DNA during genetic recombination and DNA repair, while the RuvA-RuvB complex plays an important role in the rescue of blocked DNA replication forks via replication fork reversal (RFR). RuvA specifically binds to HJ cruciform DNA, conferring on it an open structure. The RuvB hexamer acts as an ATP-dependent pump, pulling dsDNA into and through the RuvAB complex. RuvB forms 2 homohexamers on either side of HJ DNA bound by 1 or 2 RuvA tetramers; 4 subunits per hexamer contact DNA at a time. Coordinated motions by a converter formed by DNA-disengaged RuvB subunits stimulates ATP hydrolysis and nucleotide exchange. Immobilization of the converter enables RuvB to convert the ATP-contained energy into a lever motion, pulling 2 nucleotides of DNA out of the RuvA tetramer per ATP hydrolyzed, thus driving DNA branch migration. The RuvB motors rotate together with the DNA substrate, which together with the progressing nucleotide cycle form the mechanistic basis for DNA recombination by continuous HJ branch migration. Branch migration allows RuvC to scan DNA until it finds its consensus sequence, where it cleaves and resolves cruciform DNA. The sequence is that of Holliday junction branch migration complex subunit RuvB from Teredinibacter turnerae (strain ATCC 39867 / T7901).